We begin with the raw amino-acid sequence, 138 residues long: Large ribosomal subunit protein uL16 (138 aa).

The span at 1-13 (MLQPARRKYRKEQ) shows a compositional bias: basic residues. Residues 1-22 (MLQPARRKYRKEQKGRNTGVAT) are disordered.

Belongs to the universal ribosomal protein uL16 family. As to quaternary structure, part of the 50S ribosomal subunit.

Its function is as follows. Binds 23S rRNA and is also seen to make contacts with the A and possibly P site tRNAs. In Polaromonas sp. (strain JS666 / ATCC BAA-500), this protein is Large ribosomal subunit protein uL16.